A 457-amino-acid chain; its full sequence is Multidrug resistance protein MdtK (457 aa).

The next 12 membrane-spanning stretches (helical) occupy residues 11–31 (LLALAIPVILAQIAQTAMGFV), 53–73 (IWLPAILFGHGLLLALTPVIA), 93–113 (WLAGFVSVLIMLVLWNAGYII), 127–147 (AVGYLRALLWGAPGYLFFQVA), 160–180 (GMVMGFIGLLVNIPVNYIFIY), 189–209 (GGVGCGVATAAVYWVMFLAMV), 243–263 (LPIALALFFEVTLFAVVALLV), 276–296 (IALNFSSLMFVLPMSLAAAVT), 314–334 (AARTGLMVGVCMATLTAIFTV), 350–370 (VVTLAAHLMLLAAVYQISDSI), 387–407 (IFYITFTAYWVLGLPSGYILA), and 418–438 (PAGFWIGFIIGLTSAAIMMML).

It belongs to the multi antimicrobial extrusion (MATE) (TC 2.A.66.1) family. MdtK subfamily.

The protein resides in the cell inner membrane. Multidrug efflux pump that functions probably as a Na(+)/drug antiporter. The chain is Multidrug resistance protein MdtK from Escherichia coli (strain SE11).